The primary structure comprises 83 residues: Protein midgut expression 1 (83 aa).

As to expression, endoderm-specific pattern of expression during embryogenesis; anterior and posterior midgut primordia.

Involved in morphogenesis and development. This is Protein midgut expression 1 (mex1) from Drosophila melanogaster (Fruit fly).